Consider the following 292-residue polypeptide: Quinolinate synthase (292 aa).

Residues H8 and S25 each coordinate iminosuccinate. [4Fe-4S] cluster is bound at residue C70. Iminosuccinate-binding positions include 96–98 and S113; that span reads YVN. C158 lines the [4Fe-4S] cluster pocket. Iminosuccinate-binding positions include 184–186 and T201; that span reads HPE. Residue C244 coordinates [4Fe-4S] cluster.

This sequence belongs to the quinolinate synthase family. Type 2 subfamily. The cofactor is [4Fe-4S] cluster.

The protein resides in the cytoplasm. It carries out the reaction iminosuccinate + dihydroxyacetone phosphate = quinolinate + phosphate + 2 H2O + H(+). The protein operates within cofactor biosynthesis; NAD(+) biosynthesis; quinolinate from iminoaspartate: step 1/1. Functionally, catalyzes the condensation of iminoaspartate with dihydroxyacetone phosphate to form quinolinate. The sequence is that of Quinolinate synthase (nadA) from Methanopyrus kandleri (strain AV19 / DSM 6324 / JCM 9639 / NBRC 100938).